The primary structure comprises 295 residues: Aspartate carbamoyltransferase catalytic subunit (295 aa).

Carbamoyl phosphate is bound by residues arginine 49 and threonine 50. Lysine 77 is an L-aspartate binding site. Arginine 99, histidine 127, and glutamine 130 together coordinate carbamoyl phosphate. Residues arginine 161 and arginine 212 each contribute to the L-aspartate site. Residues glycine 251 and proline 252 each coordinate carbamoyl phosphate.

The protein belongs to the aspartate/ornithine carbamoyltransferase superfamily. ATCase family. In terms of assembly, heterododecamer (2C3:3R2) of six catalytic PyrB chains organized as two trimers (C3), and six regulatory PyrI chains organized as three dimers (R2).

It catalyses the reaction carbamoyl phosphate + L-aspartate = N-carbamoyl-L-aspartate + phosphate + H(+). It functions in the pathway pyrimidine metabolism; UMP biosynthesis via de novo pathway; (S)-dihydroorotate from bicarbonate: step 2/3. Its function is as follows. Catalyzes the condensation of carbamoyl phosphate and aspartate to form carbamoyl aspartate and inorganic phosphate, the committed step in the de novo pyrimidine nucleotide biosynthesis pathway. The protein is Aspartate carbamoyltransferase catalytic subunit of Campylobacter jejuni subsp. jejuni serotype O:23/36 (strain 81-176).